The chain runs to 392 residues: Riboflavin biosynthesis protein PYRD, chloroplastic (392 aa).

Residues M1–R26 constitute a chloroplast transit peptide. The region spanning L46–R168 is the CMP/dCMP-type deaminase domain. H95 provides a ligand contact to Zn(2+). E97 functions as the Proton donor in the catalytic mechanism. The Zn(2+) site is built by C120 and C129.

The cofactor is Zn(2+).

It localises to the plastid. The protein localises to the chloroplast. It carries out the reaction 2,5-diamino-6-hydroxy-4-(5-phosphoribosylamino)-pyrimidine + H2O + H(+) = 5-amino-6-(5-phospho-D-ribosylamino)uracil + NH4(+). It functions in the pathway cofactor biosynthesis; riboflavin biosynthesis; 5-amino-6-(D-ribitylamino)uracil from GTP: step 2/4. Monofunctional pyrimidine deaminase involved in the riboflavin biosynthesis pathway. Also has a reductase domain that lacks catalytically essential substrate-binding residues. The sequence is that of Riboflavin biosynthesis protein PYRD, chloroplastic (PYRD) from Zea mays (Maize).